Here is a 357-residue protein sequence, read N- to C-terminus: UDP-N-acetylglucosamine--N-acetylmuramyl-(pentapeptide) pyrophosphoryl-undecaprenol N-acetylglucosamine transferase (357 aa).

UDP-N-acetyl-alpha-D-glucosamine contacts are provided by residues 13–15, Asn-125, Arg-161, Ser-189, Ile-243, and Gln-288; that span reads TGG.

The protein belongs to the glycosyltransferase 28 family. MurG subfamily.

It is found in the cell inner membrane. It carries out the reaction di-trans,octa-cis-undecaprenyl diphospho-N-acetyl-alpha-D-muramoyl-L-alanyl-D-glutamyl-meso-2,6-diaminopimeloyl-D-alanyl-D-alanine + UDP-N-acetyl-alpha-D-glucosamine = di-trans,octa-cis-undecaprenyl diphospho-[N-acetyl-alpha-D-glucosaminyl-(1-&gt;4)]-N-acetyl-alpha-D-muramoyl-L-alanyl-D-glutamyl-meso-2,6-diaminopimeloyl-D-alanyl-D-alanine + UDP + H(+). The protein operates within cell wall biogenesis; peptidoglycan biosynthesis. Its function is as follows. Cell wall formation. Catalyzes the transfer of a GlcNAc subunit on undecaprenyl-pyrophosphoryl-MurNAc-pentapeptide (lipid intermediate I) to form undecaprenyl-pyrophosphoryl-MurNAc-(pentapeptide)GlcNAc (lipid intermediate II). The sequence is that of UDP-N-acetylglucosamine--N-acetylmuramyl-(pentapeptide) pyrophosphoryl-undecaprenol N-acetylglucosamine transferase from Polynucleobacter asymbioticus (strain DSM 18221 / CIP 109841 / QLW-P1DMWA-1) (Polynucleobacter necessarius subsp. asymbioticus).